Reading from the N-terminus, the 235-residue chain is 1-(5-phosphoribosyl)-5-[(5-phosphoribosylamino)methylideneamino] imidazole-4-carboxamide isomerase (235 aa).

Asp8 serves as the catalytic Proton acceptor. Catalysis depends on Asp127, which acts as the Proton donor.

It belongs to the HisA/HisF family.

It is found in the cytoplasm. The catalysed reaction is 1-(5-phospho-beta-D-ribosyl)-5-[(5-phospho-beta-D-ribosylamino)methylideneamino]imidazole-4-carboxamide = 5-[(5-phospho-1-deoxy-D-ribulos-1-ylimino)methylamino]-1-(5-phospho-beta-D-ribosyl)imidazole-4-carboxamide. Its pathway is amino-acid biosynthesis; L-histidine biosynthesis; L-histidine from 5-phospho-alpha-D-ribose 1-diphosphate: step 4/9. In Nautilia profundicola (strain ATCC BAA-1463 / DSM 18972 / AmH), this protein is 1-(5-phosphoribosyl)-5-[(5-phosphoribosylamino)methylideneamino] imidazole-4-carboxamide isomerase.